A 137-amino-acid polypeptide reads, in one-letter code: Nucleoside diphosphate kinase (137 aa).

Positions 10, 58, 86, 92, 103, and 113 each coordinate ATP. The active-site Pros-phosphohistidine intermediate is histidine 116.

This sequence belongs to the NDK family. Homotetramer. Requires Mg(2+) as cofactor.

The protein localises to the cytoplasm. The catalysed reaction is a 2'-deoxyribonucleoside 5'-diphosphate + ATP = a 2'-deoxyribonucleoside 5'-triphosphate + ADP. It carries out the reaction a ribonucleoside 5'-diphosphate + ATP = a ribonucleoside 5'-triphosphate + ADP. Major role in the synthesis of nucleoside triphosphates other than ATP. The ATP gamma phosphate is transferred to the NDP beta phosphate via a ping-pong mechanism, using a phosphorylated active-site intermediate. The sequence is that of Nucleoside diphosphate kinase from Helicobacter acinonychis (strain Sheeba).